A 78-amino-acid polypeptide reads, in one-letter code: Large ribosomal subunit protein bL31 (78 aa).

The protein belongs to the bacterial ribosomal protein bL31 family. Type A subfamily. Part of the 50S ribosomal subunit.

Binds the 23S rRNA. The protein is Large ribosomal subunit protein bL31 (rpmE) of Rickettsia typhi (strain ATCC VR-144 / Wilmington).